Here is a 250-residue protein sequence, read N- to C-terminus: Type III pantothenate kinase (250 aa).

Residue D6–V13 coordinates ATP. G103–R106 serves as a coordination point for substrate. D105 (proton acceptor) is an active-site residue. Residue D125 participates in K(+) binding. Residue T128 coordinates ATP. T180 contacts substrate.

Belongs to the type III pantothenate kinase family. In terms of assembly, homodimer. It depends on NH4(+) as a cofactor. K(+) serves as cofactor.

Its subcellular location is the cytoplasm. The enzyme catalyses (R)-pantothenate + ATP = (R)-4'-phosphopantothenate + ADP + H(+). The protein operates within cofactor biosynthesis; coenzyme A biosynthesis; CoA from (R)-pantothenate: step 1/5. Catalyzes the phosphorylation of pantothenate (Pan), the first step in CoA biosynthesis. This is Type III pantothenate kinase from Frankia alni (strain DSM 45986 / CECT 9034 / ACN14a).